Here is a 305-residue protein sequence, read N- to C-terminus: MPIRISDDLPAADILRSENIFTMSESRASLQNIRPLRVLILNLMPKKIETETQIMRLLSNTPLQVNVELIRVDARASRNTPKEHLDKFYSDFDRVKNQKWDGFVITGAPLGQLPFEDVYYWEKFVEIVEWSRHNVTSTLFLCWAAQAALTYLYGLKKETRGDKLSGIYLHRTHHHHHPLVRGFDDEFWAPLSRFAEFNSEVVSENSDLTIFADAPNAGIYLAASPDCRQVYVTGHPEYDASTLHNEYLRDLEEGLEPKQPVNYYPDNDQNKTPRAIWRSHGNLLYSNWLNYCVYQVTPYDLADLI.

Catalysis depends on cysteine 142, which acts as the Acyl-thioester intermediate. Substrate-binding residues include lysine 163 and serine 192. Histidine 235 acts as the Proton acceptor in catalysis. The active site involves glutamate 237. Arginine 249 serves as a coordination point for substrate.

This sequence belongs to the MetA family.

The protein resides in the cytoplasm. The catalysed reaction is L-homoserine + succinyl-CoA = O-succinyl-L-homoserine + CoA. It functions in the pathway amino-acid biosynthesis; L-methionine biosynthesis via de novo pathway; O-succinyl-L-homoserine from L-homoserine: step 1/1. Its function is as follows. Transfers a succinyl group from succinyl-CoA to L-homoserine, forming succinyl-L-homoserine. The chain is Homoserine O-succinyltransferase from Psychromonas ingrahamii (strain DSM 17664 / CCUG 51855 / 37).